Reading from the N-terminus, the 453-residue chain is Bifunctional protein GlmU (453 aa).

The pyrophosphorylase stretch occupies residues 1–227; it reads MTQLSVVILA…LMEVEGANNR (227 aa). UDP-N-acetyl-alpha-D-glucosamine-binding positions include 9–12, K23, Q74, 79–80, 101–103, G138, E152, N167, and N225; these read LAAG, GT, and YGD. D103 is a binding site for Mg(2+). N225 provides a ligand contact to Mg(2+). Residues 228 to 248 are linker; sequence LQLAALERYYQKIQAEKLLLA. Positions 249–453 are N-acetyltransferase; it reads GVTIIDPARF…IQGWQRPTKK (205 aa). UDP-N-acetyl-alpha-D-glucosamine-binding residues include R331 and K349. Residue H361 is the Proton acceptor of the active site. Residues Y364 and N375 each coordinate UDP-N-acetyl-alpha-D-glucosamine. Acetyl-CoA contacts are provided by residues A378, 384–385, S403, A421, and R438; that span reads NY.

It in the N-terminal section; belongs to the N-acetylglucosamine-1-phosphate uridyltransferase family. In the C-terminal section; belongs to the transferase hexapeptide repeat family. In terms of assembly, homotrimer. It depends on Mg(2+) as a cofactor.

Its subcellular location is the cytoplasm. The catalysed reaction is alpha-D-glucosamine 1-phosphate + acetyl-CoA = N-acetyl-alpha-D-glucosamine 1-phosphate + CoA + H(+). It carries out the reaction N-acetyl-alpha-D-glucosamine 1-phosphate + UTP + H(+) = UDP-N-acetyl-alpha-D-glucosamine + diphosphate. It participates in nucleotide-sugar biosynthesis; UDP-N-acetyl-alpha-D-glucosamine biosynthesis; N-acetyl-alpha-D-glucosamine 1-phosphate from alpha-D-glucosamine 6-phosphate (route II): step 2/2. It functions in the pathway nucleotide-sugar biosynthesis; UDP-N-acetyl-alpha-D-glucosamine biosynthesis; UDP-N-acetyl-alpha-D-glucosamine from N-acetyl-alpha-D-glucosamine 1-phosphate: step 1/1. Its pathway is bacterial outer membrane biogenesis; LPS lipid A biosynthesis. In terms of biological role, catalyzes the last two sequential reactions in the de novo biosynthetic pathway for UDP-N-acetylglucosamine (UDP-GlcNAc). The C-terminal domain catalyzes the transfer of acetyl group from acetyl coenzyme A to glucosamine-1-phosphate (GlcN-1-P) to produce N-acetylglucosamine-1-phosphate (GlcNAc-1-P), which is converted into UDP-GlcNAc by the transfer of uridine 5-monophosphate (from uridine 5-triphosphate), a reaction catalyzed by the N-terminal domain. The protein is Bifunctional protein GlmU of Glaesserella parasuis serovar 5 (strain SH0165) (Haemophilus parasuis).